We begin with the raw amino-acid sequence, 513 residues long: ATP synthase subunit alpha (513 aa).

169–176 (GDRQTGKT) serves as a coordination point for ATP.

Belongs to the ATPase alpha/beta chains family. F-type ATPases have 2 components, CF(1) - the catalytic core - and CF(0) - the membrane proton channel. CF(1) has five subunits: alpha(3), beta(3), gamma(1), delta(1), epsilon(1). CF(0) has three main subunits: a(1), b(2) and c(9-12). The alpha and beta chains form an alternating ring which encloses part of the gamma chain. CF(1) is attached to CF(0) by a central stalk formed by the gamma and epsilon chains, while a peripheral stalk is formed by the delta and b chains.

Its subcellular location is the cell inner membrane. It catalyses the reaction ATP + H2O + 4 H(+)(in) = ADP + phosphate + 5 H(+)(out). Its function is as follows. Produces ATP from ADP in the presence of a proton gradient across the membrane. The alpha chain is a regulatory subunit. The protein is ATP synthase subunit alpha of Bordetella avium (strain 197N).